Reading from the N-terminus, the 166-residue chain is Cyanate hydratase (166 aa).

Active-site residues include Arg-92, Glu-95, and Ser-118.

The protein belongs to the cyanase family.

The catalysed reaction is cyanate + hydrogencarbonate + 3 H(+) = NH4(+) + 2 CO2. Functionally, catalyzes the reaction of cyanate with bicarbonate to produce ammonia and carbon dioxide. This is Cyanate hydratase from Zea mays (Maize).